The chain runs to 218 residues: Eukaryotic translation initiation factor 3 subunit K (218 aa).

Positions 44–205 constitute a PCI domain; it reads YDWGANLAVL…NIKTKNITEK (162 aa).

It belongs to the eIF-3 subunit K family. As to quaternary structure, component of the eukaryotic translation initiation factor 3 (eIF-3) complex.

It is found in the cytoplasm. Component of the eukaryotic translation initiation factor 3 (eIF-3) complex, which is involved in protein synthesis of a specialized repertoire of mRNAs and, together with other initiation factors, stimulates binding of mRNA and methionyl-tRNAi to the 40S ribosome. The eIF-3 complex specifically targets and initiates translation of a subset of mRNAs involved in cell proliferation. This is Eukaryotic translation initiation factor 3 subunit K from Bombyx mori (Silk moth).